The chain runs to 1400 residues: DNA-directed RNA polymerase subunit beta' (1400 aa).

Residues Cys71, Cys73, Cys86, and Cys89 each contribute to the Zn(2+) site. Residues Asp462, Asp464, and Asp466 each coordinate Mg(2+). Zn(2+) is bound by residues Cys810, Cys884, Cys891, and Cys894.

The protein belongs to the RNA polymerase beta' chain family. The RNAP catalytic core consists of 2 alpha, 1 beta, 1 beta' and 1 omega subunit. When a sigma factor is associated with the core the holoenzyme is formed, which can initiate transcription. The cofactor is Mg(2+). Zn(2+) serves as cofactor.

It carries out the reaction RNA(n) + a ribonucleoside 5'-triphosphate = RNA(n+1) + diphosphate. In terms of biological role, DNA-dependent RNA polymerase catalyzes the transcription of DNA into RNA using the four ribonucleoside triphosphates as substrates. The chain is DNA-directed RNA polymerase subunit beta' from Rhodopseudomonas palustris (strain TIE-1).